We begin with the raw amino-acid sequence, 859 residues long: Rod cGMP-specific 3',5'-cyclic phosphodiesterase subunit alpha (859 aa).

G2 is modified (N-acetylglycine). GAF domains follow at residues 73–222 and 254–431; these read QAEK…NLIM and DIER…GWSV. One can recognise a PDEase domain in the interval 483–816; that stretch reads EEEELAEILQ…KEWKALADEY (334 aa). Catalysis depends on H559, which acts as the Proton donor. 4 residues coordinate a divalent metal cation: H563, H599, D600, and D720. A disordered region spans residues 823 to 859; that stretch reads LEEEKQKQQAAKQAASGNQPGGNPLQGAPASKSCCIQ. The residue at position 856 (C856) is a Cysteine methyl ester. Residue C856 is the site of S-farnesyl cysteine attachment. Residues 857-859 constitute a propeptide, removed in mature form; sequence CIQ.

The protein belongs to the cyclic nucleotide phosphodiesterase family. Oligomer composed of two catalytic chains (alpha and beta), an inhibitory chain (gamma) and the delta chain. Requires a divalent metal cation as cofactor.

The protein localises to the cell membrane. It localises to the cell projection. The protein resides in the cilium. Its subcellular location is the photoreceptor outer segment. It carries out the reaction 3',5'-cyclic GMP + H2O = GMP + H(+). Functionally, rod-specific cGMP phosphodiesterase that catalyzes the hydrolysis of 3',5'-cyclic GMP. This protein participates in processes of transmission and amplification of the visual signal. This is Rod cGMP-specific 3',5'-cyclic phosphodiesterase subunit alpha from Mus musculus (Mouse).